We begin with the raw amino-acid sequence, 347 residues long: Bombesin receptor-activated protein C6orf89 (347 aa).

Over 1 to 58 (MDLAANEISIYDKLSETVDLVRQTGHQCGMSEKAIEKFIRQLLEKNEPQRPPPQYPLL) the chain is Cytoplasmic. A helical membrane pass occupies residues 59–79 (IVVYKVLATLGLILLTAYFVI). Residues 80–347 (QPFSPLAPEP…ICDGTAFSEL (268 aa)) lie on the Extracellular side of the membrane.

Homodimer. Interacts with BRS3. Interacts (via N-terminus) with SIN3B. In terms of processing, glycosylated.

It is found in the golgi apparatus membrane. It localises to the midbody. Its subcellular location is the cytoplasm. The protein localises to the nucleus. The protein resides in the nucleolus. Functionally, exhibits histone deacetylase (HDAC) enhancer properties. May play a role in cell cycle progression and wound repair of bronchial epithelial cells. The sequence is that of Bombesin receptor-activated protein C6orf89 (C6orf89) from Homo sapiens (Human).